We begin with the raw amino-acid sequence, 199 residues long: MNPRQAEVERNTLETQIRVTLNLDGSGQADLHTGLPFLDHMIHQIVRHGLFDMHIQAQGDLDIDAHHTVEDIGIALGQAFARAVGDKAGIQRYGHAYVPLDEALSRVVVDLSGRPGLIFAVEFPRAQVGDFDVDLFHEFFQGFVNHAQVTLHLDTLRGSNTHHIAETLFKACGRALRMAVAPDPRMAGAVPSTKGTLTL.

Belongs to the imidazoleglycerol-phosphate dehydratase family.

Its subcellular location is the cytoplasm. It catalyses the reaction D-erythro-1-(imidazol-4-yl)glycerol 3-phosphate = 3-(imidazol-4-yl)-2-oxopropyl phosphate + H2O. It participates in amino-acid biosynthesis; L-histidine biosynthesis; L-histidine from 5-phospho-alpha-D-ribose 1-diphosphate: step 6/9. The protein is Imidazoleglycerol-phosphate dehydratase of Acidithiobacillus ferrooxidans (strain ATCC 53993 / BNL-5-31) (Leptospirillum ferrooxidans (ATCC 53993)).